The chain runs to 483 residues: MDKFLNNRWAVKIIALLFALLLYVAVNSNQAPTPKKPGESFFPTSTTDEATLTDIPVKAYYDDENYVVTGVPQTVNVTIKGSTSAVKKARQTKNFEIYADMEHLKTGTHKVELKAKNVSDGLTISINPSVTTVTIQERTTKSFPVEVEYYNKSKMKKGYSPEQPIVSPKNVQITGSKNVIDNISLVKASVNLENADETIEKEAKVTVYDKDGNALPVDVEPSVIKITVPVTSPSKKVPFKIERTGSLPDGVSIANIESSPSEVTVYGSQDVLDSLEFIDGVSLDLSKINKDSDIEADIPLPDGVKKISPSKVTLHIEVDSEADQKFENVPIKTVGLSSSQNIEFLDPESQAIDVTAKGSPTNINKLKKSDIELYVNVSDLEDGEHSVKLEVNGPQNVTWSLGRKNAKIKLTSKKSNTSTNDNSSNTSGNQDTDKQTNDQKNNQQEDTKNTDKNNNDQNQDGNKDQNQDQDEDESTANSQSSSE.

The helical transmembrane segment at 9 to 26 (WAVKIIALLFALLLYVAV) threads the bilayer. YbbR-like domains are found at residues 55–135 (IPVK…TVTI), 143–228 (FPVE…KITV), 237–316 (VPFK…TLHI), and 329–394 (VPIK…VNGP). The disordered stretch occupies residues 410–483 (LTSKKSNTST…STANSQSSSE (74 aa)). Residues 413 to 430 (KKSNTSTNDNSSNTSGNQ) show a composition bias toward low complexity. The segment covering 431-454 (DTDKQTNDQKNNQQEDTKNTDKNN) has biased composition (basic and acidic residues).

Interacts with CdaA.

It localises to the cell membrane. In terms of biological role, upon coexpression in E.coli stimulates the diadenylate cyclase activity of CdaA about 20-fold. In B.subtilis c-di-AMP is a second messenger that mediates growth, DNA repair and cell wall homeostasis; it is toxic when present in excess. The polypeptide is CdaA regulatory protein CdaR (Bacillus subtilis (strain 168)).